Reading from the N-terminus, the 215-residue chain is Cytochrome b6 (215 aa).

A helical membrane pass occupies residues 32–52 (IFYCFGGIVFTCFLVQVATGF). C35 is a heme c binding site. H86 and H100 together coordinate heme b. 3 consecutive transmembrane segments (helical) span residues 90–110 (ASMM…TGGF), 116–136 (LTWV…VTGY), and 186–206 (AHTF…FLMI). 2 residues coordinate heme b: H187 and H202.

The protein belongs to the cytochrome b family. PetB subfamily. As to quaternary structure, the 4 large subunits of the cytochrome b6-f complex are cytochrome b6, subunit IV (17 kDa polypeptide, PetD), cytochrome f and the Rieske protein, while the 4 small subunits are PetG, PetL, PetM and PetN. The complex functions as a dimer. Heme b serves as cofactor. Heme c is required as a cofactor.

The protein localises to the plastid. It localises to the chloroplast thylakoid membrane. In terms of biological role, component of the cytochrome b6-f complex, which mediates electron transfer between photosystem II (PSII) and photosystem I (PSI), cyclic electron flow around PSI, and state transitions. The polypeptide is Cytochrome b6 (Skeletonema costatum (Marine centric diatom)).